The primary structure comprises 59 residues: Large ribosomal subunit protein uL30 (59 aa).

It belongs to the universal ribosomal protein uL30 family. As to quaternary structure, part of the 50S ribosomal subunit.

The polypeptide is Large ribosomal subunit protein uL30 (Bacillus licheniformis (strain ATCC 14580 / DSM 13 / JCM 2505 / CCUG 7422 / NBRC 12200 / NCIMB 9375 / NCTC 10341 / NRRL NRS-1264 / Gibson 46)).